The sequence spans 226 residues: ATP-dependent dethiobiotin synthetase BioD (226 aa).

ATP is bound at residue 12–17 (GIGKTV). Thr-16 contacts Mg(2+). Residue Lys-37 is part of the active site. A substrate-binding site is contributed by Thr-41. Residues Asp-49, 108–111 (EGAG), and 197–199 (PAG) contribute to the ATP site. Mg(2+) contacts are provided by Asp-49 and Glu-108.

This sequence belongs to the dethiobiotin synthetase family. In terms of assembly, homodimer. Mg(2+) is required as a cofactor.

The protein localises to the cytoplasm. It carries out the reaction (7R,8S)-7,8-diammoniononanoate + CO2 + ATP = (4R,5S)-dethiobiotin + ADP + phosphate + 3 H(+). It functions in the pathway cofactor biosynthesis; biotin biosynthesis; biotin from 7,8-diaminononanoate: step 1/2. Functionally, catalyzes a mechanistically unusual reaction, the ATP-dependent insertion of CO2 between the N7 and N8 nitrogen atoms of 7,8-diaminopelargonic acid (DAPA, also called 7,8-diammoniononanoate) to form a ureido ring. The protein is ATP-dependent dethiobiotin synthetase BioD of Mycolicibacterium vanbaalenii (strain DSM 7251 / JCM 13017 / BCRC 16820 / KCTC 9966 / NRRL B-24157 / PYR-1) (Mycobacterium vanbaalenii).